Consider the following 354-residue polypeptide: Phenylalanine 4-monooxygenase, chloroplastic (354 aa).

Residues 1-60 (MAFPLQKTFLCSNGQSFPCSNGRSTSTLLASDLKFQRLNKPFILRVGSMQIRNSPKEHPR) constitute a chloroplast transit peptide. Fe cation contacts are provided by His-229, His-234, and Glu-274.

The protein belongs to the biopterin-dependent aromatic amino acid hydroxylase family. As to quaternary structure, forms monomers. Fe(2+) is required as a cofactor.

It is found in the plastid. The protein resides in the chloroplast. The catalysed reaction is (6R)-L-erythro-5,6,7,8-tetrahydrobiopterin + L-phenylalanine + O2 = (4aS,6R)-4a-hydroxy-L-erythro-5,6,7,8-tetrahydrobiopterin + L-tyrosine. Catalyzes the hydroxylation of L-phenylalanine to L-tyrosine. Does not seem to be tetrahydropterin-dependent and shows preference for 10-formyltetrahydrofolate as cosubstrate and electron donor. This chain is Phenylalanine 4-monooxygenase, chloroplastic, found in Pinus taeda (Loblolly pine).